The primary structure comprises 139 residues: Phosphoribosyl-AMP cyclohydrolase (139 aa).

Aspartate 92 lines the Mg(2+) pocket. Residue cysteine 93 participates in Zn(2+) binding. 2 residues coordinate Mg(2+): aspartate 94 and aspartate 96. Zn(2+) contacts are provided by cysteine 111 and cysteine 118.

Belongs to the PRA-CH family. In terms of assembly, homodimer. It depends on Mg(2+) as a cofactor. Requires Zn(2+) as cofactor.

It localises to the cytoplasm. It carries out the reaction 1-(5-phospho-beta-D-ribosyl)-5'-AMP + H2O = 1-(5-phospho-beta-D-ribosyl)-5-[(5-phospho-beta-D-ribosylamino)methylideneamino]imidazole-4-carboxamide. The protein operates within amino-acid biosynthesis; L-histidine biosynthesis; L-histidine from 5-phospho-alpha-D-ribose 1-diphosphate: step 3/9. Its function is as follows. Catalyzes the hydrolysis of the adenine ring of phosphoribosyl-AMP. In Caulobacter vibrioides (strain ATCC 19089 / CIP 103742 / CB 15) (Caulobacter crescentus), this protein is Phosphoribosyl-AMP cyclohydrolase.